Here is a 55-residue protein sequence, read N- to C-terminus: Neurotoxin B-IV (55 aa).

Position 10 is a hydroxyproline (P10). 4 disulfide bridges follow: C12–C52, C16–C48, C23–C41, and C26–C37.

Belongs to the worm B-toxin family.

The protein localises to the secreted. This toxin increases the excitability of nerves by delaying the inactivation of the voltage-gated sodium channel (Nav). Only acts on some crustacean. Is more abundant, but 15-fold less toxic than neurotoxin B-II. The protein is Neurotoxin B-IV of Cerebratulus lacteus (Milky ribbon worm).